The following is a 186-amino-acid chain: Early nodulin-like protein 13 (186 aa).

The first 23 residues, 1 to 23 (MAQRTLVATFFLIFFLLTNLVCS), serve as a signal peptide directing secretion. Positions 24–128 (KEIIVGGKTS…GEKLHIVVMS (105 aa)) constitute a Phytocyanin domain. Residues Cys82 and Cys116 are joined by a disulfide bond. Residues Asn83 and Asn90 are each glycosylated (N-linked (GlcNAc...) asparagine). Ala165 carries GPI-anchor amidated alanine lipidation. A propeptide spans 166–186 (SSLTRQVGVLGFVGLLAIVLL) (removed in mature form).

This sequence belongs to the early nodulin-like (ENODL) family. Mostly expressed in seedlings, siliques and flowers, and, to a lower extent, in roots, stems and seeds, but barely in leaves.

It localises to the cell membrane. Its function is as follows. May act as a carbohydrate transporter. Required, together with ENODL11, ENODL12, ENODL13, ENODL14 and ENODL15, for male-female communication and pollen tube reception and burst at the synergid cell surface of the female gametophyte. This chain is Early nodulin-like protein 13, found in Arabidopsis thaliana (Mouse-ear cress).